Consider the following 479-residue polypeptide: Aldehyde dehydrogenase family 3 member B2 (479 aa).

Active-site residues include E223 and C257. C476 carries the cysteine methyl ester modification. C476 carries the S-geranylgeranyl cysteine lipid modification. Residues 477-479 constitute a propeptide, removed in mature form; sequence TLL.

It belongs to the aldehyde dehydrogenase family. Post-translationally, geranylgeranylation is important for localization to lipid droplets and enzyme activity. Expressed in testis, white adipose tissue, lung, small intestine, kidney, spleen and liver.

It is found in the lipid droplet. The catalysed reaction is an aldehyde + NAD(+) + H2O = a carboxylate + NADH + 2 H(+). It catalyses the reaction a long-chain fatty aldehyde + NAD(+) + H2O = a long-chain fatty acid + NADH + 2 H(+). The enzyme catalyses a medium-chain fatty aldehyde + NAD(+) + H2O = a medium-chain fatty acid + NADH + 2 H(+). It carries out the reaction hexadecanoate + NADH + 2 H(+) = hexadecanal + NAD(+) + H2O. The catalysed reaction is octanal + NAD(+) + H2O = octanoate + NADH + 2 H(+). Its pathway is alcohol metabolism; ethanol degradation; acetate from ethanol: step 2/2. Its function is as follows. Oxidizes medium and long chain fatty aldehydes in lipid droplets into non-toxic fatty acids. In Mus musculus (Mouse), this protein is Aldehyde dehydrogenase family 3 member B2.